Consider the following 143-residue polypeptide: Class I hydrophobin 20 (143 aa).

The signal sequence occupies residues 1-22 (MLSHPMKLLFFVFALSALLAAA). 4 disulfide bridges follow: Cys54-Cys123, Cys62-Cys117, Cys63-Cys102, and Cys124-Cys137.

Belongs to the fungal hydrophobin family. Self-assembles to form functional amyloid fibrils called rodlets. Self-assembly into fibrillar rodlets occurs spontaneously at hydrophobic:hydrophilic interfaces and the rodlets further associate laterally to form amphipathic monolayers.

It localises to the secreted. The protein localises to the cell wall. In terms of biological role, aerial growth, conidiation, and dispersal of filamentous fungi in the environment rely upon a capability of their secreting small amphipathic proteins called hydrophobins (HPBs) with low sequence identity. Class I can self-assemble into an outermost layer of rodlet bundles on aerial cell surfaces, conferring cellular hydrophobicity that supports fungal growth, development and dispersal; whereas Class II form highly ordered films at water-air interfaces through intermolecular interactions but contribute nothing to the rodlet structure. Hydph20 is a class I hydrophobin involved in mycelial growth. The chain is Class I hydrophobin 20 from Pleurotus ostreatus (strain PC15) (Oyster mushroom).